Here is a 231-residue protein sequence, read N- to C-terminus: tRNA (guanine-N(1)-)-methyltransferase (231 aa).

Residues Gly112 and 132–137 (LGDFVL) each bind S-adenosyl-L-methionine.

Belongs to the RNA methyltransferase TrmD family. Homodimer.

Its subcellular location is the cytoplasm. It catalyses the reaction guanosine(37) in tRNA + S-adenosyl-L-methionine = N(1)-methylguanosine(37) in tRNA + S-adenosyl-L-homocysteine + H(+). Specifically methylates guanosine-37 in various tRNAs. The polypeptide is tRNA (guanine-N(1)-)-methyltransferase (Gloeothece citriformis (strain PCC 7424) (Cyanothece sp. (strain PCC 7424))).